Here is a 184-residue protein sequence, read N- to C-terminus: NADH-quinone oxidoreductase subunit B (184 aa).

Residues Cys-63, Cys-64, Cys-128, and Cys-158 each coordinate [4Fe-4S] cluster.

Belongs to the complex I 20 kDa subunit family. NDH-1 is composed of 14 different subunits. Subunits NuoB, C, D, E, F, and G constitute the peripheral sector of the complex. [4Fe-4S] cluster is required as a cofactor.

It localises to the cell inner membrane. It catalyses the reaction a quinone + NADH + 5 H(+)(in) = a quinol + NAD(+) + 4 H(+)(out). Functionally, NDH-1 shuttles electrons from NADH, via FMN and iron-sulfur (Fe-S) centers, to quinones in the respiratory chain. Couples the redox reaction to proton translocation (for every two electrons transferred, four hydrogen ions are translocated across the cytoplasmic membrane), and thus conserves the redox energy in a proton gradient. This Xanthomonas campestris pv. campestris (strain 8004) protein is NADH-quinone oxidoreductase subunit B.